We begin with the raw amino-acid sequence, 368 residues long: Phospho-N-acetylmuramoyl-pentapeptide-transferase (368 aa).

10 consecutive transmembrane segments (helical) span residues T32–D52, T79–A99, L102–Y122, T140–G160, V176–G196, G207–A227, L247–P267, I271–A291, I296–V316, and Q345–L365.

The protein belongs to the glycosyltransferase 4 family. MraY subfamily. Requires Mg(2+) as cofactor.

It is found in the cell inner membrane. The enzyme catalyses UDP-N-acetyl-alpha-D-muramoyl-L-alanyl-gamma-D-glutamyl-meso-2,6-diaminopimeloyl-D-alanyl-D-alanine + di-trans,octa-cis-undecaprenyl phosphate = di-trans,octa-cis-undecaprenyl diphospho-N-acetyl-alpha-D-muramoyl-L-alanyl-D-glutamyl-meso-2,6-diaminopimeloyl-D-alanyl-D-alanine + UMP. The protein operates within cell wall biogenesis; peptidoglycan biosynthesis. Catalyzes the initial step of the lipid cycle reactions in the biosynthesis of the cell wall peptidoglycan: transfers peptidoglycan precursor phospho-MurNAc-pentapeptide from UDP-MurNAc-pentapeptide onto the lipid carrier undecaprenyl phosphate, yielding undecaprenyl-pyrophosphoryl-MurNAc-pentapeptide, known as lipid I. The sequence is that of Phospho-N-acetylmuramoyl-pentapeptide-transferase from Nitrobacter hamburgensis (strain DSM 10229 / NCIMB 13809 / X14).